Reading from the N-terminus, the 306-residue chain is UDP-N-acetylenolpyruvoylglucosamine reductase (306 aa).

Residues 34–199 form the FAD-binding PCMH-type domain; sequence RVGGPAQLLF…TSVRLRGAIA (166 aa). Arginine 179 is an active-site residue. Catalysis depends on serine 228, which acts as the Proton donor. Glutamate 298 is an active-site residue.

This sequence belongs to the MurB family. FAD serves as cofactor.

It is found in the cytoplasm. It carries out the reaction UDP-N-acetyl-alpha-D-muramate + NADP(+) = UDP-N-acetyl-3-O-(1-carboxyvinyl)-alpha-D-glucosamine + NADPH + H(+). It participates in cell wall biogenesis; peptidoglycan biosynthesis. Functionally, cell wall formation. This Rhodopseudomonas palustris (strain BisA53) protein is UDP-N-acetylenolpyruvoylglucosamine reductase.